The chain runs to 416 residues: Pectin acetylesterase 10 (416 aa).

An N-terminal signal peptide occupies residues 1-20 (MRKLFLLGFIVAGLVLGNEA). N-linked (GlcNAc...) asparagine glycosylation occurs at N27. Catalysis depends on charge relay system residues S198, D294, and H361.

This sequence belongs to the pectinacetylesterase family.

The protein localises to the secreted. It localises to the cell wall. Hydrolyzes acetyl esters in homogalacturonan regions of pectin. In type I primary cell wall, galacturonic acid residues of pectin can be acetylated at the O-2 and O-3 positions. Decreasing the degree of acetylation of pectin gels in vitro alters their physical properties. This chain is Pectin acetylesterase 10, found in Arabidopsis thaliana (Mouse-ear cress).